Reading from the N-terminus, the 328-residue chain is Protein MGF 300-4L (328 aa).

This sequence belongs to the asfivirus MGF 300 family.

This chain is Protein MGF 300-4L, found in Ornithodoros (relapsing fever ticks).